We begin with the raw amino-acid sequence, 1953 residues long: MGVKKKKEMQVAVLTICHQDLETLKSFADAEGKNLASLLLRCVQLTDGVSQIHYVKQIVPLLEKVGKNGVCDPTIQSCLDILAGIYLSLSLKNPLKKVLASSLNSLPDFFLPEAVHRFTSRLQEELNTTDLYSYRKVIDNISSCMENFNLGRAGVNNLLKNVLHFLQKSLIEIVEENRKCAGNHIIQTQLMNDLLVGIRVSMTLVQKVQDFQGNLWKASNSPIWQNMCGLLSIFTKFLSDDDLLQTVQSTSGLAITLFIKTMFHPSEKIPHLISSVLLRSVDCTSVPEWFMNSCRSLCCGNVSGSAVLFLCQGTLAMLDWQNGSMGRSGEALLLDTAHVLFTLSSQIKEPTLEMFLSRIMASWTNSAIQVLESSSPSLRDSLNGNSSIVGRLLEYVYTHWEHPLDALRHQTKIMFKNLLQMHRLTVEGAVLVPDPFFVKLTESLLRLEWHIKGKYMCLGCLVECIGIEHILAIDKTIPSQILEVMGDQSLVPYASDLLETMFKNHKSHLKSQTAESSWIDQWHETWVSPLLFILCEGNLDQKSYVIDYYLPKLLSYSPESLQYMVKILQTSIDAKTGQEQSFPSLGSCNSRGALGALMACLRIARAHGHLQSATDTWENLVSGARIKQGLIHQHCQVRIDTLGLLCESNRSTEIVSMEEMQWIQFFITYNLNSQSPGVRQQICSLLKKLFCRIQESSQVLYKLEQNKSKHEPEKELTKQHPSVSLQQYKNFMSSICNSLFEALFPGSSYSTRFSALTILGSIAEVFHVPEGRIYTVYQLNHDIDVGRFQALMECFTSTFEDVKMLAFDLLMKLSKTAVHFQDSEKLQGLFQAALALSTSTKPYDCVTASYLLNFLIWQDALPSSLSVYLTQQVARGDGDRPASVVERNTLMVIKCLMENLEEEVYQAENSLLQAAASFPMYGRVHCITGALQKLSLNSLQLVSEWRPVVEKLLLMSYRLSTVVSPVIQSSSPEGLIPMDTDSESASRLQMILNEIQPRDTNDYFNQAKILKEHDSFDMKDLNASVVNIDISTEIKGKEVKTCDVTAQMVLVCCWRSMKEVALLLGTLCQLLPMQPVPESSDGLLTVEQVKEIGDYFKQHLLQSRHRGAFELAYTGFVKLTEVLNRCPNVSLQKLPEQWLWSVLEEIKCSDPSSKLCATRRSAGIPFYIQALLASEPKKGKMDLLKITMKELISLAGPTDDLQSTVPQVHALNILRALFRDTRLGENIIPYVADGAKAAILGFTSPVWAVRNSSTLLFSALITRIFGVKRAKDELSKTNRMTGREFFSRFPELYPFLLKQLETVANAVDSDMGEPNRHPSMFLLLLVLERLYPSPMDGTSSALSMGPFVPFIMRCGHSPVYHSREMAARALVPFVMIDHIPNTIRTLLATLPSCTDQCFRQNRIHGTLLQVFHLLQAYSDSKHRTNSDFQHELTDITVCTKAKLWLAKRQNPCLVTRAVYIDILFLLTCCLNKSVKDNQPVLESLGLWEEVRGIISGSELITGFPCAFKAPGLPQYLESLTRLTIAAVWAAAAKSGERERDVPISFSQLLESAFPEVRSLTLEALLEKFLSAASGLGENGLPPLLCNMEEKFLLLAMKENHPECFCKILKILHCMDPGEWLPQTEHCVHLTPKEFLIWTMDVASNERSEIQSVALRLASKVISHHMQTCVENRELIAAELKQWVQLVILSCEDHLPTESRLAVVEVLTSTAPLFLTNPHPILELQDTLALWKCVLTLLQSEEQAVRDAATETVTTAMSQENTCQSTEFAFCQVDASIALALALAVLCDLLQQWNQLASGLPILLRWLLGDSDDLVVCVESLHQVEEDYLFEKAEVNFWAETLIFVKYLCKHLFCLLSKSGWRLPSPEMLCHLQRMVSEQCRLLSQLFRELPPAAEFVKTVEFTRLRIQEERTLACLKLLAFLEGKEGEDTLVLSVWDSSAEARQLTLPRTEAAC.

Positions 888 to 918 (NTLMVIKCLMENLEEEVYQAENSLLQAAASF) form a coiled coil. Phosphoserine is present on residues S1015, S1024, and S1161.

The protein belongs to the THADA family.

Functionally, together with methyltransferase FTSJ1, methylates the 2'-O-ribose of nucleotides at position 32 of the anticodon loop of substrate tRNAs. The polypeptide is tRNA (32-2'-O)-methyltransferase regulator THADA (THADA) (Chlorocebus aethiops (Green monkey)).